The sequence spans 71 residues: uncharacterized protein (71 aa).

The protein resides in the plastid. It is found in the chloroplast. This is an uncharacterized protein from Mesostigma viride (Green alga).